A 341-amino-acid polypeptide reads, in one-letter code: Dehydration-responsive element-binding protein 2C (341 aa).

A Nuclear localization signal motif is present at residues 8–48; that stretch reads RKRKSRGTRDVAEILRQWREYNEQIEAESCIDGGGPKSIRK. The segment at 36 to 63 is disordered; sequence SCIDGGGPKSIRKPPPKGSRKGCMKGKG. Positions 45 to 59 are enriched in basic residues; the sequence is SIRKPPPKGSRKGCM. The AP2/ERF DNA-binding region spans 71-128; that stretch reads DYRGVRQRRWGKWVAEIREPDGGARLWLGTFSSSYEAALAYDEAAKAIYGQSARLNLP.

It belongs to the AP2/ERF transcription factor family. ERF subfamily.

The protein localises to the nucleus. Functionally, transcriptional activator that binds specifically to the DNA sequence 5'-[AG]CCGAC-3'. Binding to the C-repeat/DRE element mediates high salinity- and abscisic acid-inducible transcription. In Arabidopsis thaliana (Mouse-ear cress), this protein is Dehydration-responsive element-binding protein 2C (DREB2C).